The chain runs to 179 residues: Large ribosomal subunit protein uL5 (179 aa).

The protein belongs to the universal ribosomal protein uL5 family. In terms of assembly, part of the 50S ribosomal subunit; part of the 5S rRNA/L5/L18/L25 subcomplex. Contacts the 5S rRNA and the P site tRNA. Forms a bridge to the 30S subunit in the 70S ribosome.

In terms of biological role, this is one of the proteins that bind and probably mediate the attachment of the 5S RNA into the large ribosomal subunit, where it forms part of the central protuberance. In the 70S ribosome it contacts protein S13 of the 30S subunit (bridge B1b), connecting the 2 subunits; this bridge is implicated in subunit movement. Contacts the P site tRNA; the 5S rRNA and some of its associated proteins might help stabilize positioning of ribosome-bound tRNAs. The chain is Large ribosomal subunit protein uL5 from Herminiimonas arsenicoxydans.